The primary structure comprises 273 residues: MMKRQFEDVTRIVIKIGTSSLVLPTGKINLEKIDQLAFVISSLMNKGKEVILVSSGAMGFGLDILKMEKRPTNLAKQQAVSSVGQVAMMSLYSQIFAHYQTNVSQILLTRDVVVFPESLANVTNAFESLISLGIVPIVNENDAVSVDEMDHATKFGDNDRLSAVVAGITKADLLIMLSDIDGLFDKNPTIYEDAQLRSHVAVITQEIIASAGGAGSKFGTGGMLSKIQSAQMVFENKGQMVLMNGANPRDILRVLEGQLLGTWFKQIEEVRHD.

Lysine 15 contacts ATP. Substrate contacts are provided by serine 55, aspartate 142, and asparagine 158. ATP is bound by residues 178 to 179 (SD) and 220 to 226 (TGGMLSK).

It belongs to the glutamate 5-kinase family.

It is found in the cytoplasm. It catalyses the reaction L-glutamate + ATP = L-glutamyl 5-phosphate + ADP. The protein operates within amino-acid biosynthesis; L-proline biosynthesis; L-glutamate 5-semialdehyde from L-glutamate: step 1/2. In terms of biological role, catalyzes the transfer of a phosphate group to glutamate to form L-glutamate 5-phosphate. The protein is Glutamate 5-kinase of Streptococcus pyogenes serotype M49 (strain NZ131).